The sequence spans 164 residues: 3-isopropylmalate dehydratase small subunit 1 (164 aa).

Belongs to the LeuD family. LeuD type 2 subfamily. As to quaternary structure, heterodimer of LeuC and LeuD.

The catalysed reaction is (2R,3S)-3-isopropylmalate = (2S)-2-isopropylmalate. The protein operates within amino-acid biosynthesis; L-leucine biosynthesis; L-leucine from 3-methyl-2-oxobutanoate: step 2/4. Functionally, catalyzes the isomerization between 2-isopropylmalate and 3-isopropylmalate, via the formation of 2-isopropylmaleate. This is 3-isopropylmalate dehydratase small subunit 1 (leuD1) from Pyrococcus abyssi (strain GE5 / Orsay).